A 486-amino-acid polypeptide reads, in one-letter code: N-succinylglutamate 5-semialdehyde dehydrogenase (486 aa).

220-225 contacts NAD(+); sequence GSSRTG. Catalysis depends on residues Glu243 and Cys277.

The protein belongs to the aldehyde dehydrogenase family. AstD subfamily.

It carries out the reaction N-succinyl-L-glutamate 5-semialdehyde + NAD(+) + H2O = N-succinyl-L-glutamate + NADH + 2 H(+). The protein operates within amino-acid degradation; L-arginine degradation via AST pathway; L-glutamate and succinate from L-arginine: step 4/5. Its function is as follows. Catalyzes the NAD-dependent reduction of succinylglutamate semialdehyde into succinylglutamate. This Shewanella piezotolerans (strain WP3 / JCM 13877) protein is N-succinylglutamate 5-semialdehyde dehydrogenase.